Reading from the N-terminus, the 666-residue chain is Endogenous retrovirus group K member 21 Gag polyprotein (666 aa).

Residue Gly2 is the site of N-myristoyl glycine attachment. Disordered stretches follow at residues 165-189 and 217-264; these read GKGP…AGQV and ELQY…GSEL. Pro residues predominate over residues 232–247; sequence GMPPAPQGRAPYPQPP. 2 consecutive CCHC-type zinc fingers follow at residues 544 to 561 and 580 to 597; these read GKCY…NCPV and DLCP…QCRS. The interval 598-641 is disordered; sequence KFDKNGQPLSGNEQRGQPQAPQQTGAFPIQPFVPQGFQGQQPPL. Residues 604-622 show a composition bias toward polar residues; the sequence is QPLSGNEQRGQPQAPQQTG. The span at 624 to 640 shows a compositional bias: low complexity; that stretch reads FPIQPFVPQGFQGQQPP.

The protein belongs to the beta type-B retroviral Gag protein family. HERV class-II K(HML-2) gag subfamily. In terms of processing, myristoylation is essential for retroviral assembly. Alteration of the glycine residue leads to a block in the budding of particles and an accumulation of Gag inside the cell. Specific enzymatic cleavages may yield mature proteins.

The protein resides in the cell membrane. Functionally, the products of the Gag polyproteins of infectious retroviruses perform highly complex orchestrated tasks during the assembly, budding, maturation, and infection stages of the viral replication cycle. During viral assembly, the proteins form membrane associations and self-associations that ultimately result in budding of an immature virion from the infected cell. Gag precursors also function during viral assembly to selectively bind and package two plus strands of genomic RNA. Endogenous Gag proteins may have kept, lost or modified their original function during evolution. This chain is Endogenous retrovirus group K member 21 Gag polyprotein (ERVK-21), found in Homo sapiens (Human).